Consider the following 372-residue polypeptide: Bifunctional enzyme IspD/IspF (372 aa).

The interval 1–210 is 2-C-methyl-D-erythritol 4-phosphate cytidylyltransferase; the sequence is MLDLSLIMLG…LNLNSPSNDI (210 aa). The 2-C-methyl-D-erythritol 2,4-cyclodiphosphate synthase stretch occupies residues 211–372; it reads FCGNGFDVHA…LKYFNWRNVL (162 aa). Aspartate 217 and histidine 219 together coordinate a divalent metal cation. 4-CDP-2-C-methyl-D-erythritol 2-phosphate contacts are provided by residues 217-219 and 243-244; these read DVH and HS. Histidine 251 contributes to the a divalent metal cation binding site. 4-CDP-2-C-methyl-D-erythritol 2-phosphate contacts are provided by residues 265 to 267, 270 to 274, 341 to 344, phenylalanine 348, and arginine 351; these read DIG, YPDND, and TTTE.

The protein in the N-terminal section; belongs to the IspD/TarI cytidylyltransferase family. IspD subfamily. In the C-terminal section; belongs to the IspF family. Requires a divalent metal cation as cofactor.

The catalysed reaction is 2-C-methyl-D-erythritol 4-phosphate + CTP + H(+) = 4-CDP-2-C-methyl-D-erythritol + diphosphate. The enzyme catalyses 4-CDP-2-C-methyl-D-erythritol 2-phosphate = 2-C-methyl-D-erythritol 2,4-cyclic diphosphate + CMP. Its pathway is isoprenoid biosynthesis; isopentenyl diphosphate biosynthesis via DXP pathway; isopentenyl diphosphate from 1-deoxy-D-xylulose 5-phosphate: step 2/6. It functions in the pathway isoprenoid biosynthesis; isopentenyl diphosphate biosynthesis via DXP pathway; isopentenyl diphosphate from 1-deoxy-D-xylulose 5-phosphate: step 4/6. Its function is as follows. Bifunctional enzyme that catalyzes the formation of 4-diphosphocytidyl-2-C-methyl-D-erythritol from CTP and 2-C-methyl-D-erythritol 4-phosphate (MEP) (IspD), and catalyzes the conversion of 4-diphosphocytidyl-2-C-methyl-D-erythritol 2-phosphate (CDP-ME2P) to 2-C-methyl-D-erythritol 2,4-cyclodiphosphate (ME-CPP) with a corresponding release of cytidine 5-monophosphate (CMP) (IspF). The sequence is that of Bifunctional enzyme IspD/IspF from Campylobacter fetus subsp. fetus (strain 82-40).